Consider the following 658-residue polypeptide: Alkyldihydroxyacetonephosphate synthase, peroxisomal (658 aa).

Positions 1–24 (MAEAAAAAAAAAAAGETSASSGSA) are enriched in low complexity. The interval 1-37 (MAEAAAAAAAAAAAGETSASSGSAAERDPDQDRAGRR) is disordered. The transit peptide at 1–58 (MAEAAAAAAAAAAAGETSASSGSAAERDPDQDRAGRRLRVLSGHLLGRPQEALSTNEC) directs the protein to the peroxisome. The segment covering 25 to 35 (AERDPDQDRAG) has biased composition (basic and acidic residues). Ser65 is modified (phosphoserine). Thr74 bears the Phosphothreonine mark. Lys102 carries the post-translational modification N6-acetyllysine. One can recognise an FAD-binding PCMH-type domain in the interval 202–384 (FERIPDIVLW…TEATIKIRPT (183 aa)). FAD-binding positions include 234–240 (PIGGGTS), 303–309 (DSLEFST), and 316–319 (TRAS). At Lys347 the chain carries N6-acetyllysine. 368–374 (EGTLGVI) lines the FAD pocket. Residue Arg515 coordinates substrate. Tyr578 serves as the catalytic Proton donor/acceptor. 2 important for enzyme activity regions span residues 615–617 (HHH) and 654–658 (NRNLL).

The protein belongs to the FAD-binding oxidoreductase/transferase type 4 family. In terms of assembly, homodimer. FAD serves as cofactor.

The protein resides in the peroxisome membrane. It localises to the peroxisome. It catalyses the reaction a long chain fatty alcohol + a 1-acylglycerone 3-phosphate = a 1-O-alkylglycerone 3-phosphate + a long-chain fatty acid + H(+). The enzyme catalyses hexadecan-1-ol + 1-hexadecanoylglycerone 3-phosphate = 1-O-hexadecylglycerone 3-phosphate + hexadecanoate + H(+). It carries out the reaction 1-hexadecanoylglycerone 3-phosphate + a long-chain fatty acid = a 1-acylglycerone 3-phosphate + hexadecanoate. The protein operates within glycerolipid metabolism; ether lipid biosynthesis. With respect to regulation, inhibited by N-ethylmaleimide, p-bromophenacylbromide, 2,4- dinitrofluorobenzene and divalent cations such as such as Mn(2+), Mg(2+) and Zn(2+). Inhibition by p-bromophenacylbromide is strongly pH dependent and is highest at alkaline conditions. Catalyzes the exchange of the acyl chain in acyl-dihydroxyacetonephosphate (acyl-DHAP) for a long chain fatty alcohol, yielding the first ether linked intermediate, i.e. alkyl-dihydroxyacetonephosphate (alkyl-DHAP), in the pathway of ether lipid biosynthesis. The polypeptide is Alkyldihydroxyacetonephosphate synthase, peroxisomal (AGPS) (Cavia porcellus (Guinea pig)).